A 443-amino-acid chain; its full sequence is Probable glycine dehydrogenase (decarboxylating) subunit 1 (443 aa).

This sequence belongs to the GcvP family. N-terminal subunit subfamily. The glycine cleavage system is composed of four proteins: P, T, L and H. In this organism, the P 'protein' is a heterodimer of two subunits.

It carries out the reaction N(6)-[(R)-lipoyl]-L-lysyl-[glycine-cleavage complex H protein] + glycine + H(+) = N(6)-[(R)-S(8)-aminomethyldihydrolipoyl]-L-lysyl-[glycine-cleavage complex H protein] + CO2. Functionally, the glycine cleavage system catalyzes the degradation of glycine. The P protein binds the alpha-amino group of glycine through its pyridoxal phosphate cofactor; CO(2) is released and the remaining methylamine moiety is then transferred to the lipoamide cofactor of the H protein. The chain is Probable glycine dehydrogenase (decarboxylating) subunit 1 from Nitratidesulfovibrio vulgaris (strain ATCC 29579 / DSM 644 / CCUG 34227 / NCIMB 8303 / VKM B-1760 / Hildenborough) (Desulfovibrio vulgaris).